A 423-amino-acid chain; its full sequence is MERYTDLVISKIPELGFTNLLCHIYSLAGLCSNIDVSKFLTNCNGYVVEKYDKSTTAGKVSCIPIGMMLELVESGHLSRPNSSDELDQKKELTDELKTRYHSIYDVFELPTSIPLAYFFKPRLREKVSKAIDFSQMDLKIDDLSRKGIHTGENPKVVKMKIEPERGAWMSNRSIKNLVSQFAYGSEVDYIGQFDMRFLNSLAIHEKFDAFMNKHILSYILKDKIKSSTSRFVMFGFCYLSHWKCVIYDKKQCLVSFYDSGGNIPTEFHHYNNFYFYSFSDGFNTNHRHSVLDNTNCDIDVLFRFFECTFGAKIGCINVEVNQLLESECGMFISLFMILCTRTPPKSFKSLKKVYTFFKFLADKKMTLFKSILFNLHDLSLDITETDNAGLKEYKRMEKWTKKSINVICDKLTTKLNRIVDDDE.

Catalysis depends on residues His-241, Asp-248, and Cys-328.

The protein belongs to the peptidase C57 family.

It is found in the virion. In terms of biological role, late protein responsible for processing most or all of the viral core and membrane proteins known to undergo morphogenesis-associated proteolysis. These proteolytic events are involved in the transformation of immature virions (IV) into mature virions (MV). Probably cleaves at least the OPG129, OPG136, OPG098, and OPG144 precursors preferentially at Ala-Gly-|-Ala motifs. Also seems to process Ala-Gly-|-Ser and Ala-Gly-|-Thr motifs. This chain is Core protease OPG082 (OPG083), found in Homo sapiens (Human).